The sequence spans 356 residues: 3-dehydroquinate synthase (356 aa).

NAD(+) is bound by residues 71–76 (EGEASK), 105–109 (GVTGD), 129–130 (TS), Lys142, and Lys151. Zn(2+) is bound by residues Glu184, His247, and His264.

Belongs to the sugar phosphate cyclases superfamily. Dehydroquinate synthase family. Co(2+) is required as a cofactor. The cofactor is Zn(2+). It depends on NAD(+) as a cofactor.

The protein resides in the cytoplasm. It carries out the reaction 7-phospho-2-dehydro-3-deoxy-D-arabino-heptonate = 3-dehydroquinate + phosphate. Its pathway is metabolic intermediate biosynthesis; chorismate biosynthesis; chorismate from D-erythrose 4-phosphate and phosphoenolpyruvate: step 2/7. In terms of biological role, catalyzes the conversion of 3-deoxy-D-arabino-heptulosonate 7-phosphate (DAHP) to dehydroquinate (DHQ). The sequence is that of 3-dehydroquinate synthase from Lactococcus lactis subsp. cremoris (strain MG1363).